We begin with the raw amino-acid sequence, 100 residues long: NADH-quinone oxidoreductase subunit K 2 (100 aa).

3 helical membrane-spanning segments follow: residues 2–22, 29–49, and 61–81; these read LAIENYLILSAILFAIGTIGV, IVIFMCIELMLNAVNLTFIAF, and FVFFVMTVAAAEAAVGLALMI.

Belongs to the complex I subunit 4L family. In terms of assembly, NDH-1 is composed of 14 different subunits. Subunits NuoA, H, J, K, L, M, N constitute the membrane sector of the complex.

It is found in the cell inner membrane. It carries out the reaction a quinone + NADH + 5 H(+)(in) = a quinol + NAD(+) + 4 H(+)(out). In terms of biological role, NDH-1 shuttles electrons from NADH, via FMN and iron-sulfur (Fe-S) centers, to quinones in the respiratory chain. The immediate electron acceptor for the enzyme in this species is believed to be ubiquinone. Couples the redox reaction to proton translocation (for every two electrons transferred, four hydrogen ions are translocated across the cytoplasmic membrane), and thus conserves the redox energy in a proton gradient. In Geobacter sp. (strain M21), this protein is NADH-quinone oxidoreductase subunit K 2.